A 163-amino-acid chain; its full sequence is Nucleotide-binding protein CJJ81176_0398 (163 aa).

It belongs to the YajQ family.

Its function is as follows. Nucleotide-binding protein. This chain is Nucleotide-binding protein CJJ81176_0398, found in Campylobacter jejuni subsp. jejuni serotype O:23/36 (strain 81-176).